The sequence spans 175 residues: Small ribosomal subunit protein uS5 (175 aa).

The S5 DRBM domain maps to 19–82 (WVDRLVSVNR…DDAKKNVIRV (64 aa)).

It belongs to the universal ribosomal protein uS5 family. Part of the 30S ribosomal subunit. Contacts proteins S4 and S8.

Functionally, with S4 and S12 plays an important role in translational accuracy. In terms of biological role, located at the back of the 30S subunit body where it stabilizes the conformation of the head with respect to the body. This Salinibacter ruber (strain DSM 13855 / M31) protein is Small ribosomal subunit protein uS5.